Consider the following 203-residue polypeptide: Outer-membrane lipoprotein carrier protein (203 aa).

The signal sequence occupies residues 1–21 (MKKLLVACCLLSGLISAHALA).

The protein belongs to the LolA family. Monomer.

It localises to the periplasm. Functionally, participates in the translocation of lipoproteins from the inner membrane to the outer membrane. Only forms a complex with a lipoprotein if the residue after the N-terminal Cys is not an aspartate (The Asp acts as a targeting signal to indicate that the lipoprotein should stay in the inner membrane). This chain is Outer-membrane lipoprotein carrier protein, found in Yersinia enterocolitica serotype O:8 / biotype 1B (strain NCTC 13174 / 8081).